The chain runs to 173 residues: Crossover junction endodeoxyribonuclease RuvC (173 aa).

Residues D8, E67, and D139 contribute to the active site. Mg(2+) is bound by residues D8, E67, and D139.

This sequence belongs to the RuvC family. As to quaternary structure, homodimer which binds Holliday junction (HJ) DNA. The HJ becomes 2-fold symmetrical on binding to RuvC with unstacked arms; it has a different conformation from HJ DNA in complex with RuvA. In the full resolvosome a probable DNA-RuvA(4)-RuvB(12)-RuvC(2) complex forms which resolves the HJ. It depends on Mg(2+) as a cofactor.

Its subcellular location is the cytoplasm. It carries out the reaction Endonucleolytic cleavage at a junction such as a reciprocal single-stranded crossover between two homologous DNA duplexes (Holliday junction).. In terms of biological role, the RuvA-RuvB-RuvC complex processes Holliday junction (HJ) DNA during genetic recombination and DNA repair. Endonuclease that resolves HJ intermediates. Cleaves cruciform DNA by making single-stranded nicks across the HJ at symmetrical positions within the homologous arms, yielding a 5'-phosphate and a 3'-hydroxyl group; requires a central core of homology in the junction. The consensus cleavage sequence is 5'-(A/T)TT(C/G)-3'. Cleavage occurs on the 3'-side of the TT dinucleotide at the point of strand exchange. HJ branch migration catalyzed by RuvA-RuvB allows RuvC to scan DNA until it finds its consensus sequence, where it cleaves and resolves the cruciform DNA. This is Crossover junction endodeoxyribonuclease RuvC from Aliivibrio fischeri (strain ATCC 700601 / ES114) (Vibrio fischeri).